Reading from the N-terminus, the 146-residue chain is Hemoglobin subunit beta-1 (146 aa).

Residues 2-146 (GLTAHDRQLI…IADALGKGYH (145 aa)) form the Globin domain. Heme b-binding residues include His-63 and His-92.

This sequence belongs to the globin family. Heterotetramer of two alpha chains and two beta chains. As to expression, red blood cells.

Functionally, involved in oxygen transport from the lung to the various peripheral tissues. This Xenopus laevis (African clawed frog) protein is Hemoglobin subunit beta-1 (hbb1).